The following is a 564-amino-acid chain: 5-aminolevulinate synthase, mitochondrial (564 aa).

A mitochondrion-targeting transit peptide spans 1 to 57 (MESITKVSMSVCPFVRSTSTQALRQLSQTSGALANQARQCPIAGNAIRAKEISIRSY). Arg-113, Ser-226, and Lys-245 together coordinate substrate. Positions 278, 306, and 350 each coordinate pyridoxal 5'-phosphate. Residue Lys-353 is part of the active site. Residue Lys-353 is modified to N6-(pyridoxal phosphate)lysine. Residues Thr-382 and Thr-383 each contribute to the pyridoxal 5'-phosphate site. A substrate-binding site is contributed by Thr-468.

The protein belongs to the class-II pyridoxal-phosphate-dependent aminotransferase family. Homodimer. Requires pyridoxal 5'-phosphate as cofactor.

It is found in the mitochondrion matrix. The enzyme catalyses succinyl-CoA + glycine + H(+) = 5-aminolevulinate + CO2 + CoA. The protein operates within porphyrin-containing compound metabolism; protoporphyrin-IX biosynthesis; 5-aminolevulinate from glycine: step 1/1. Its function is as follows. Catalyzes the synthesis of 5-aminolevulinate (ALA) from succinyl-CoA and glycine, the first and rate-limiting step in heme biosynthesis. This Candida albicans (strain SC5314 / ATCC MYA-2876) (Yeast) protein is 5-aminolevulinate synthase, mitochondrial (HEM1).